The primary structure comprises 145 residues: Large ribosomal subunit protein uL13 (145 aa).

The protein belongs to the universal ribosomal protein uL13 family. In terms of assembly, part of the 50S ribosomal subunit.

Functionally, this protein is one of the early assembly proteins of the 50S ribosomal subunit, although it is not seen to bind rRNA by itself. It is important during the early stages of 50S assembly. The chain is Large ribosomal subunit protein uL13 from Haloquadratum walsbyi (strain DSM 16790 / HBSQ001).